The sequence spans 161 residues: Large ribosomal subunit protein uL16 (161 aa).

A disordered region spans residues Leu-140–Ser-161.

This sequence belongs to the universal ribosomal protein uL16 family. Part of the 50S ribosomal subunit.

Binds 23S rRNA and is also seen to make contacts with the A and possibly P site tRNAs. The protein is Large ribosomal subunit protein uL16 of Prochlorococcus marinus (strain NATL2A).